Consider the following 359-residue polypeptide: 3-dehydroquinate synthase (359 aa).

Residues 69 to 74, 103 to 107, 127 to 128, Lys140, Lys149, and 167 to 170 contribute to the NAD(+) site; these read DGEAYK, GVIGD, TT, and CLKT. Zn(2+) is bound by residues Glu182, His245, and His262.

This sequence belongs to the sugar phosphate cyclases superfamily. Dehydroquinate synthase family. It depends on Co(2+) as a cofactor. The cofactor is Zn(2+). NAD(+) is required as a cofactor.

The protein resides in the cytoplasm. The enzyme catalyses 7-phospho-2-dehydro-3-deoxy-D-arabino-heptonate = 3-dehydroquinate + phosphate. It participates in metabolic intermediate biosynthesis; chorismate biosynthesis; chorismate from D-erythrose 4-phosphate and phosphoenolpyruvate: step 2/7. Catalyzes the conversion of 3-deoxy-D-arabino-heptulosonate 7-phosphate (DAHP) to dehydroquinate (DHQ). The chain is 3-dehydroquinate synthase from Aeromonas salmonicida (strain A449).